Here is a 2439-residue protein sequence, read N- to C-terminus: Mucin-6 (2439 aa).

A signal peptide spans 1 to 22; sequence MVQRWLLLSCCGALLSAGLANT. Positions 43–214 constitute a VWFD 1 domain; sequence GQCSTWGAGH…KLDDPGEICT (172 aa). 2 disulfide bridges follow: Cys-45/Cys-176 and Cys-67/Cys-213. The N-linked (GlcNAc...) asparagine glycan is linked to Asn-268. Positions 302 to 357 constitute a TIL domain; the sequence is CPANQVYQECGSACVKTCSNPQHSCSSSCTFGCFCPEGTVLNDLSNNHTCVPVTQC. Residues 395-579 enclose the VWFD 2 domain; that stretch reads GHCSLEGGSF…ALERETDPCS (185 aa). 2 disulfide bridges follow: Cys-397/Cys-533 and Cys-419/Cys-578. 2 N-linked (GlcNAc...) asparagine glycosylation sites follow: Asn-486 and Asn-659. Positions 866-1038 constitute a VWFD 3 domain; the sequence is STCTLYGEGH…NSWKESPLCG (173 aa). 4 disulfide bridges follow: Cys-868–Cys-1002, Cys-890–Cys-1037, Cys-899–Cys-999, and Cys-917–Cys-924. Asn-975 and Asn-1179 each carry an N-linked (GlcNAc...) asparagine glycan. Disordered stretches follow at residues 1202–1455, 1471–1626, 1642–1834, 1868–1983, 2033–2077, 2090–2196, 2233–2278, and 2323–2348; these read PQPP…TSLV, ATSA…LVTP, SASI…HPHT, SIHS…STGP, ATSA…THSS, SSSW…SASP, VSPT…SLTT, and LTAH…SPGV. A compositionally biased stretch (low complexity) spans 1224 to 1265; sequence TGTSTTIGLLSSTGPSPSSNHTPASPTQTPLLPATLTSSKPT. The segment covering 1276 to 1286 has biased composition (polar residues); it reads TAVTPQATSGL. Residues 1294 to 1339 show a composition bias toward low complexity; sequence STATKPTVTQATTRATASTASPATTSTAQSTTRTTMTLPTPATSGT. Residues 1340 to 1351 show a composition bias toward polar residues; that stretch reads SPTLPKSTNQEL. Low complexity-rich tracts occupy residues 1352-1373 and 1381-1415; these read PGTT…TGPT and TRPT…AGSP. Polar residues-rich tracts occupy residues 1416–1455, 1471–1481, and 1490–1520; these read VPST…TSLV, ATSASNHSAPT, and LKAT…STNK. Low complexity-rich tracts occupy residues 1521 to 1567 and 1574 to 1611; these read TPTS…ATSS and TTHS…PQTT. Residues 1561 to 1738 form a 1; truncated repeat; the sequence is TNSATSSRPP…TTSGTSQSRS (178 aa). Residues 1607–1953 form an approximate repeats region; the sequence is HPQTTLPTHV…STGTRTPVAH (347 aa). Residues 1659-1686 are compositionally biased toward polar residues; that stretch reads LKATGSTHTAPTMTLTTSGTSQALSSLN. Positions 1687–1768 are enriched in low complexity; it reads TAKTSTSLHS…PEVTSTSTTS (82 aa). Polar residues predominate over residues 1769-1793; it reads ITPNHTSTGTRTPVAHTTSATSSRL. Repeat 2 spans residues 1785 to 1953; the sequence is TTSATSSRLP…STGTRTPVAH (169 aa). 2 stretches are compositionally biased toward low complexity: residues 1794 to 1834 and 1891 to 1917; these read PTPF…HPHT and TAPP…TSTS. The span at 1918-1962 shows a compositional bias: polar residues; it reads LPYHTSSTHHPEVTPTSTTNITPKHTSTGTRTPVAHTTSASSSRL. Low complexity predominate over residues 1963–1983; that stretch reads PTPFTTHSPPTGSSPFSSTGP. Over residues 2052–2070 the composition is skewed to polar residues; that stretch reads LKATGSTHTAPPMTVTTSG. Residues 2090-2102 are compositionally biased toward low complexity; it reads SSSWLPQNSSSRP. A compositionally biased stretch (polar residues) spans 2107–2120; that stretch reads ITTQLPHLSSATTP. The segment covering 2121 to 2196 has biased composition (low complexity); that stretch reads VSTTNQLSSS…PTTASVSASP (76 aa). Residues 2240–2264 show a composition bias toward polar residues; that stretch reads HLASSTIAFPSTPRTTASTHTAPAF. Low complexity predominate over residues 2265–2278; that stretch reads SSQSTTSRSTSLTT. Positions 2323-2347 are enriched in polar residues; the sequence is LTAHGSTPASAPVSSLGTPTPTSPG. Intrachain disulfides connect Cys-2349–Cys-2396, Cys-2363–Cys-2410, Cys-2372–Cys-2430, and Cys-2376–Cys-2432. In terms of domain architecture, CTCK spans 2349–2438; the sequence is CSVREQQEEI…HCVCSSVACG (90 aa).

Multimer; disulfide-linked. In terms of processing, O-glycosylated. In terms of tissue distribution, expressed in the regenerative zone of gastric antrum, gastric body mucosa and gastric incisura mucosa. Expressed in the deeper mucous glands of gastric antrum. Overexpressed in Helicobacter pylori infected gastric epithelium. Highly expressed in duodenal Brunner's glands, gall bladder, seminal vesicle, pancreatic centroacinar cells and ducts, and periductal glands of the common bile duct.

The protein resides in the secreted. In terms of biological role, may provide a mechanism for modulation of the composition of the protective mucus layer related to acid secretion or the presence of bacteria and noxious agents in the lumen. Plays an important role in the cytoprotection of epithelial surfaces and are used as tumor markers in a variety of cancers. May play a role in epithelial organogenesis. In Homo sapiens (Human), this protein is Mucin-6 (MUC6).